A 638-amino-acid polypeptide reads, in one-letter code: 1,4-alpha-glucan branching enzyme GlgB (638 aa).

Aspartate 303 functions as the Nucleophile in the catalytic mechanism. The active-site Proton donor is glutamate 356.

Belongs to the glycosyl hydrolase 13 family. GlgB subfamily. In terms of assembly, monomer.

It catalyses the reaction Transfers a segment of a (1-&gt;4)-alpha-D-glucan chain to a primary hydroxy group in a similar glucan chain.. Its pathway is glycan biosynthesis; glycogen biosynthesis. In terms of biological role, catalyzes the formation of the alpha-1,6-glucosidic linkages in glycogen by scission of a 1,4-alpha-linked oligosaccharide from growing alpha-1,4-glucan chains and the subsequent attachment of the oligosaccharide to the alpha-1,6 position. This Lactobacillus acidophilus (strain ATCC 700396 / NCK56 / N2 / NCFM) protein is 1,4-alpha-glucan branching enzyme GlgB.